The following is a 79-amino-acid chain: Small ribosomal subunit protein bS18 (79 aa).

The protein belongs to the bacterial ribosomal protein bS18 family. As to quaternary structure, part of the 30S ribosomal subunit. Forms a tight heterodimer with protein bS6.

Functionally, binds as a heterodimer with protein bS6 to the central domain of the 16S rRNA, where it helps stabilize the platform of the 30S subunit. The sequence is that of Small ribosomal subunit protein bS18 from Bradyrhizobium sp. (strain BTAi1 / ATCC BAA-1182).